A 486-amino-acid polypeptide reads, in one-letter code: Adenylate kinase 8 (486 aa).

Adenylate kinase regions lie at residues 58–258 (PRII…NFIC) and 269–471 (PRIL…SRLV). 67 to 72 (ASGKKT) is an ATP binding site. Positions 87–112 (TFCDILKDDSDLTRAAQSYYDKKQNV) are NMP 1. AMP contacts are provided by residues 139–142 (AIPK) and R202. Positions 176–205 (GKRIDPVTGDVYHVTFMWPESEEVAQRLET) are LID 1. 278 to 283 (GAGRNL) lines the ATP pocket. Positions 298–327 (CCGELLKAVSADESHMGELIKPYLESEQQV) are NMP 2. AMP is bound by residues 325–327 (QQV) and 354–357 (GFPR). An LID 2 region spans residues 391-424 (LRAVDPVTGEWYHSVYKPPPGPEVQARLRFNPQH). Position 392 (R392) interacts with ATP. R432 provides a ligand contact to AMP.

The protein belongs to the adenylate kinase family.

It is found in the cytoplasm. Its subcellular location is the cytosol. It catalyses the reaction AMP + ATP = 2 ADP. The enzyme catalyses a 2'-deoxyribonucleoside 5'-diphosphate + ATP = a 2'-deoxyribonucleoside 5'-triphosphate + ADP. The catalysed reaction is a ribonucleoside 5'-diphosphate + ATP = a ribonucleoside 5'-triphosphate + ADP. In terms of biological role, nucleoside monophosphate (NMP) kinase that catalyzes the reversible transfer of the terminal phosphate group between nucleoside triphosphates and monophosphates. Has highest activity toward AMP, and weaker activity toward dAMP, CMP and dCMP. Also displays broad nucleoside diphosphate kinase activity. This is Adenylate kinase 8 (ak8) from Danio rerio (Zebrafish).